The primary structure comprises 404 residues: Argininosuccinate synthase (404 aa).

Residues 12-20 (AYSGGLDTS) and Ala39 contribute to the ATP site. The L-citrulline site is built by Tyr91 and Ser96. Gly121 is an ATP binding site. 3 residues coordinate L-aspartate: Thr123, Asn127, and Asp128. Residue Asn127 coordinates L-citrulline. The L-citrulline site is built by Arg131, Ser180, Ser189, Glu265, and Tyr277.

The protein belongs to the argininosuccinate synthase family. Type 1 subfamily. As to quaternary structure, homotetramer.

The protein localises to the cytoplasm. It carries out the reaction L-citrulline + L-aspartate + ATP = 2-(N(omega)-L-arginino)succinate + AMP + diphosphate + H(+). Its pathway is amino-acid biosynthesis; L-arginine biosynthesis; L-arginine from L-ornithine and carbamoyl phosphate: step 2/3. The protein is Argininosuccinate synthase of Vibrio campbellii (strain ATCC BAA-1116).